Here is a 380-residue protein sequence, read N- to C-terminus: Glucose-1-phosphate adenylyltransferase (380 aa).

Alpha-D-glucose 1-phosphate contacts are provided by residues Gly-164, 179–180 (EK), and Ser-190.

The protein belongs to the bacterial/plant glucose-1-phosphate adenylyltransferase family. Homotetramer.

The catalysed reaction is alpha-D-glucose 1-phosphate + ATP + H(+) = ADP-alpha-D-glucose + diphosphate. It functions in the pathway glycan biosynthesis; glycogen biosynthesis. Functionally, involved in the biosynthesis of ADP-glucose, a building block required for the elongation reactions to produce glycogen. Catalyzes the reaction between ATP and alpha-D-glucose 1-phosphate (G1P) to produce pyrophosphate and ADP-Glc. The polypeptide is Glucose-1-phosphate adenylyltransferase (Streptococcus pneumoniae (strain CGSP14)).